Here is an 86-residue protein sequence, read N- to C-terminus: Small ribosomal subunit protein uS15 (86 aa).

The protein belongs to the universal ribosomal protein uS15 family. In terms of assembly, part of the 30S ribosomal subunit. Forms a bridge to the 50S subunit in the 70S ribosome, contacting the 23S rRNA.

One of the primary rRNA binding proteins, it binds directly to 16S rRNA where it helps nucleate assembly of the platform of the 30S subunit by binding and bridging several RNA helices of the 16S rRNA. In terms of biological role, forms an intersubunit bridge (bridge B4) with the 23S rRNA of the 50S subunit in the ribosome. The sequence is that of Small ribosomal subunit protein uS15 from Neorickettsia sennetsu (strain ATCC VR-367 / Miyayama) (Ehrlichia sennetsu).